The primary structure comprises 98 residues: Keratin-associated protein 3-3 (98 aa).

Repeat copies occupy residues 3-7 (CCASR), 47-51 (CCDNC), and 89-93 (CCEPC). The segment at 3-59 (CCASRGCSVPTGPATTICSSDKSCRCGVCLPSTCPHTVWLLEPTCCDNCPPPCHIPQ) is 3 X 5 AA repeats of C-C-X(3).

The protein belongs to the KRTAP type 3 family. As to quaternary structure, interacts with hair keratins. As to expression, localized to the upper cortex of the hair shaft.

Its function is as follows. In the hair cortex, hair keratin intermediate filaments are embedded in an interfilamentous matrix, consisting of hair keratin-associated proteins (KRTAP), which are essential for the formation of a rigid and resistant hair shaft through their extensive disulfide bond cross-linking with abundant cysteine residues of hair keratins. The matrix proteins include the high-sulfur and high-glycine-tyrosine keratins. This Homo sapiens (Human) protein is Keratin-associated protein 3-3 (KRTAP3-3).